The chain runs to 569 residues: Urease subunit alpha (569 aa).

The 439-residue stretch at 131-569 (GGIDSHIHFI…LPLAQRYFLF (439 aa)) folds into the Urease domain. Residues His136, His138, and Lys219 each contribute to the Ni(2+) site. Lys219 carries the N6-carboxylysine modification. His221 contributes to the substrate binding site. Ni(2+) contacts are provided by His248 and His274. The active-site Proton donor is the His322. Asp362 serves as a coordination point for Ni(2+).

This sequence belongs to the metallo-dependent hydrolases superfamily. Urease alpha subunit family. As to quaternary structure, heterotrimer of UreA (gamma), UreB (beta) and UreC (alpha) subunits. Three heterotrimers associate to form the active enzyme. Ni cation is required as a cofactor. In terms of processing, carboxylation allows a single lysine to coordinate two nickel ions.

The protein resides in the cytoplasm. The enzyme catalyses urea + 2 H2O + H(+) = hydrogencarbonate + 2 NH4(+). It participates in nitrogen metabolism; urea degradation; CO(2) and NH(3) from urea (urease route): step 1/1. The polypeptide is Urease subunit alpha (Herpetosiphon aurantiacus (strain ATCC 23779 / DSM 785 / 114-95)).